A 108-amino-acid chain; its full sequence is Tetrahydromethanopterin S-methyltransferase subunit B (108 aa).

The chain crosses the membrane as a helical span at residues 79 to 99 (GMFFGFWVTMAILVLVTILAV).

This sequence belongs to the MtrB family. The complex is composed of 8 subunits; MtrA, MtrB, MtrC, MtrD, MtrE, MtrF, MtrG and MtrH.

It is found in the cell membrane. It catalyses the reaction 5-methyl-5,6,7,8-tetrahydromethanopterin + coenzyme M + 2 Na(+)(in) = 5,6,7,8-tetrahydromethanopterin + methyl-coenzyme M + 2 Na(+)(out). The protein operates within one-carbon metabolism; methanogenesis from CO(2); methyl-coenzyme M from 5,10-methylene-5,6,7,8-tetrahydromethanopterin: step 2/2. In terms of biological role, part of a complex that catalyzes the formation of methyl-coenzyme M and tetrahydromethanopterin from coenzyme M and methyl-tetrahydromethanopterin. This is an energy-conserving, sodium-ion translocating step. This Methanococcus maripaludis (strain C7 / ATCC BAA-1331) protein is Tetrahydromethanopterin S-methyltransferase subunit B.